Consider the following 304-residue polypeptide: E3 ubiquitin-protein ligase BOI (304 aa).

The interval 178–214 is WRD domain; it reads LQERVKSLYVENQIWRDIAQTNEANANTLRTNLDQVL. The stretch at 197 to 220 forms a coiled coil; it reads QTNEANANTLRTNLDQVLAQLETF. An RING-type zinc finger spans residues 254–291; it reads CKRCGEREASVLVLPCRHLCLCTVCGGSALLRTCPVCD.

As to quaternary structure, interacts with MYB108/BOS1 and the DELLA proteins GAI, RGA, RGL1, RGL2 and RGL3. In terms of tissue distribution, expressed in leaves, siliques, roots, flowering tissues and stigma tips.

It is found in the nucleus. It carries out the reaction S-ubiquitinyl-[E2 ubiquitin-conjugating enzyme]-L-cysteine + [acceptor protein]-L-lysine = [E2 ubiquitin-conjugating enzyme]-L-cysteine + N(6)-ubiquitinyl-[acceptor protein]-L-lysine.. It functions in the pathway protein degradation; proteasomal ubiquitin-dependent pathway. Functionally, E3 ubiquitin-protein ligase involved in the regulation of pathogen and abiotic stress responses by facilitating degradation of MYB108/BOI. Attenuates cell death by preventing caspase activation. Has no effect on the stability of the DELLA proteins. Not regulated by MYB108/BOI. The sequence is that of E3 ubiquitin-protein ligase BOI (BOI) from Arabidopsis thaliana (Mouse-ear cress).